We begin with the raw amino-acid sequence, 361 residues long: T-box-containing protein TBX6L (361 aa).

Positions Leu36–Glu209 form a DNA-binding region, T-box. 2 disordered regions span residues Phe203–Glu259 and His280–Ser323. Basic and acidic residues-rich tracts occupy residues Gly206–Ala220 and Lys234–Glu259. A compositionally biased stretch (low complexity) spans His280–Ala290.

It localises to the nucleus. May be involved in regulating somitogenesis. The sequence is that of T-box-containing protein TBX6L (TBX6L) from Gallus gallus (Chicken).